A 141-amino-acid polypeptide reads, in one-letter code: Hemoglobin subunit alpha (141 aa).

Residues 1-141 (VLSPADKTNL…VSTVLTSKYR (141 aa)) form the Globin domain. Ser-3 bears the Phosphoserine mark. Lys-7 is subject to N6-succinyllysine. At Thr-8 the chain carries Phosphothreonine. The residue at position 11 (Lys-11) is an N6-succinyllysine. Lys-16 carries the N6-acetyllysine; alternate modification. The residue at position 16 (Lys-16) is an N6-succinyllysine; alternate. At Tyr-24 the chain carries Phosphotyrosine. The residue at position 40 (Lys-40) is an N6-succinyllysine. The residue at position 49 (Ser-49) is a Phosphoserine. His-58 provides a ligand contact to O2. His-87 serves as a coordination point for heme b. Ser-102 bears the Phosphoserine mark. Position 108 is a phosphothreonine (Thr-108). Ser-124 bears the Phosphoserine mark. 2 positions are modified to phosphothreonine: Thr-134 and Thr-137. Ser-138 carries the post-translational modification Phosphoserine.

The protein belongs to the globin family. As to quaternary structure, heterotetramer of two alpha chains and two beta chains. In terms of tissue distribution, red blood cells.

In terms of biological role, involved in oxygen transport from the lung to the various peripheral tissues. The protein is Hemoglobin subunit alpha of Tamias striatus (Eastern chipmunk).